The sequence spans 464 residues: tRNA-2-methylthio-N(6)-dimethylallyladenosine synthase (464 aa).

One can recognise an MTTase N-terminal domain in the interval 5–122 (RKLYVKSFGC…LPEMLARVRD (118 aa)). [4Fe-4S] cluster contacts are provided by C14, C50, C85, C163, C167, and C170. One can recognise a Radical SAM core domain in the interval 149–383 (KKRGPTAFVT…VLEASKTAFD (235 aa)). Residues 384 to 446 (RACMGRRFDI…PNSLAGQVVD (63 aa)) form the TRAM domain.

The protein belongs to the methylthiotransferase family. MiaB subfamily. As to quaternary structure, monomer. [4Fe-4S] cluster is required as a cofactor.

It is found in the cytoplasm. The enzyme catalyses N(6)-dimethylallyladenosine(37) in tRNA + (sulfur carrier)-SH + AH2 + 2 S-adenosyl-L-methionine = 2-methylsulfanyl-N(6)-dimethylallyladenosine(37) in tRNA + (sulfur carrier)-H + 5'-deoxyadenosine + L-methionine + A + S-adenosyl-L-homocysteine + 2 H(+). Functionally, catalyzes the methylthiolation of N6-(dimethylallyl)adenosine (i(6)A), leading to the formation of 2-methylthio-N6-(dimethylallyl)adenosine (ms(2)i(6)A) at position 37 in tRNAs that read codons beginning with uridine. The polypeptide is tRNA-2-methylthio-N(6)-dimethylallyladenosine synthase (Azorhizobium caulinodans (strain ATCC 43989 / DSM 5975 / JCM 20966 / LMG 6465 / NBRC 14845 / NCIMB 13405 / ORS 571)).